The sequence spans 264 residues: Thymidylate synthase (264 aa).

Arg-21 serves as a coordination point for dUMP. His-51 is a binding site for (6R)-5,10-methylene-5,6,7,8-tetrahydrofolate. 126-127 (RR) provides a ligand contact to dUMP. Cys-146 acts as the Nucleophile in catalysis. DUMP-binding positions include 166–169 (RSAD), Asn-177, and 207–209 (HLY). Asp-169 provides a ligand contact to (6R)-5,10-methylene-5,6,7,8-tetrahydrofolate. Position 263 (Ala-263) interacts with (6R)-5,10-methylene-5,6,7,8-tetrahydrofolate.

The protein belongs to the thymidylate synthase family. Bacterial-type ThyA subfamily. In terms of assembly, homodimer.

Its subcellular location is the cytoplasm. The catalysed reaction is dUMP + (6R)-5,10-methylene-5,6,7,8-tetrahydrofolate = 7,8-dihydrofolate + dTMP. Its pathway is pyrimidine metabolism; dTTP biosynthesis. In terms of biological role, catalyzes the reductive methylation of 2'-deoxyuridine-5'-monophosphate (dUMP) to 2'-deoxythymidine-5'-monophosphate (dTMP) while utilizing 5,10-methylenetetrahydrofolate (mTHF) as the methyl donor and reductant in the reaction, yielding dihydrofolate (DHF) as a by-product. This enzymatic reaction provides an intracellular de novo source of dTMP, an essential precursor for DNA biosynthesis. The polypeptide is Thymidylate synthase (Ralstonia nicotianae (strain ATCC BAA-1114 / GMI1000) (Ralstonia solanacearum)).